A 1207-amino-acid polypeptide reads, in one-letter code: DNA-directed RNA polymerase subunit beta' (1207 aa).

Zn(2+) contacts are provided by C60, C62, C75, and C78. 3 residues coordinate Mg(2+): D449, D451, and D453. Positions 822, 896, 903, and 906 each coordinate Zn(2+).

Belongs to the RNA polymerase beta' chain family. In terms of assembly, the RNAP catalytic core consists of 2 alpha, 1 beta, 1 beta' and 1 omega subunit. When a sigma factor is associated with the core the holoenzyme is formed, which can initiate transcription. The cofactor is Mg(2+). Requires Zn(2+) as cofactor.

It catalyses the reaction RNA(n) + a ribonucleoside 5'-triphosphate = RNA(n+1) + diphosphate. In terms of biological role, DNA-dependent RNA polymerase catalyzes the transcription of DNA into RNA using the four ribonucleoside triphosphates as substrates. This Staphylococcus aureus (strain NCTC 8325 / PS 47) protein is DNA-directed RNA polymerase subunit beta'.